Here is a 187-residue protein sequence, read N- to C-terminus: dTTP/UTP pyrophosphatase (187 aa).

Residue D72 is the Proton acceptor of the active site.

Belongs to the Maf family. YhdE subfamily. It depends on a divalent metal cation as a cofactor.

The protein localises to the cytoplasm. It catalyses the reaction dTTP + H2O = dTMP + diphosphate + H(+). It carries out the reaction UTP + H2O = UMP + diphosphate + H(+). Nucleoside triphosphate pyrophosphatase that hydrolyzes dTTP and UTP. May have a dual role in cell division arrest and in preventing the incorporation of modified nucleotides into cellular nucleic acids. The chain is dTTP/UTP pyrophosphatase from Vibrio cholerae serotype O1 (strain ATCC 39315 / El Tor Inaba N16961).